Consider the following 192-residue polypeptide: Thymidine kinase (192 aa).

ATP is bound by residues 9–16 and 87–90; these read SAMNAGKS and DECQ. Glutamate 88 (proton acceptor) is an active-site residue. Positions 145, 147, 182, and 185 each coordinate Zn(2+).

It belongs to the thymidine kinase family. Homotetramer.

Its subcellular location is the cytoplasm. It catalyses the reaction thymidine + ATP = dTMP + ADP + H(+). This Vibrio cholerae serotype O1 (strain ATCC 39315 / El Tor Inaba N16961) protein is Thymidine kinase.